We begin with the raw amino-acid sequence, 171 residues long: 3-hydroxydecanoyl-[acyl-carrier-protein] dehydratase (171 aa).

His-70 is a catalytic residue.

Belongs to the thioester dehydratase family. FabA subfamily. As to quaternary structure, homodimer.

The protein resides in the cytoplasm. The catalysed reaction is a (3R)-hydroxyacyl-[ACP] = a (2E)-enoyl-[ACP] + H2O. It carries out the reaction (3R)-hydroxydecanoyl-[ACP] = (2E)-decenoyl-[ACP] + H2O. The enzyme catalyses (2E)-decenoyl-[ACP] = (3Z)-decenoyl-[ACP]. The protein operates within lipid metabolism; fatty acid biosynthesis. In terms of biological role, necessary for the introduction of cis unsaturation into fatty acids. Catalyzes the dehydration of (3R)-3-hydroxydecanoyl-ACP to E-(2)-decenoyl-ACP and then its isomerization to Z-(3)-decenoyl-ACP. Can catalyze the dehydratase reaction for beta-hydroxyacyl-ACPs with saturated chain lengths up to 16:0, being most active on intermediate chain length. The polypeptide is 3-hydroxydecanoyl-[acyl-carrier-protein] dehydratase (Shewanella sp. (strain ANA-3)).